The primary structure comprises 667 residues: DNA ligase (667 aa).

Residues 32–36 (DKDYD) and 80–81 (SL) each bind NAD(+). Catalysis depends on Lys121, which acts as the N6-AMP-lysine intermediate. NAD(+)-binding residues include Arg143, Glu178, and Lys314. Positions 407, 410, 423, and 429 each coordinate Zn(2+). One can recognise a BRCT domain in the interval 587-667 (IVESIFKDKT…EFEKMLGRES (81 aa)).

This sequence belongs to the NAD-dependent DNA ligase family. LigA subfamily. It depends on Mg(2+) as a cofactor. The cofactor is Mn(2+).

The catalysed reaction is NAD(+) + (deoxyribonucleotide)n-3'-hydroxyl + 5'-phospho-(deoxyribonucleotide)m = (deoxyribonucleotide)n+m + AMP + beta-nicotinamide D-nucleotide.. In terms of biological role, DNA ligase that catalyzes the formation of phosphodiester linkages between 5'-phosphoryl and 3'-hydroxyl groups in double-stranded DNA using NAD as a coenzyme and as the energy source for the reaction. It is essential for DNA replication and repair of damaged DNA. This chain is DNA ligase, found in Clostridium botulinum (strain Eklund 17B / Type B).